Here is a 1012-residue protein sequence, read N- to C-terminus: RNA-binding protein 26 (1012 aa).

A Glycyl lysine isopeptide (Lys-Gly) (interchain with G-Cter in SUMO2) cross-link involves residue K94. Positions 98–127 (LQHQEKDIKKEELTKEEEREKKFSRRLNHS) form a coiled coil. Residue K106 forms a Glycyl lysine isopeptide (Lys-Gly) (interchain with G-Cter in SUMO1); alternate linkage. K106 participates in a covalent cross-link: Glycyl lysine isopeptide (Lys-Gly) (interchain with G-Cter in SUMO2); alternate. Over residues 106 to 118 (KKEELTKEEEREK) the composition is skewed to basic and acidic residues. The interval 106–236 (KKEELTKEEE…PLENNYTPVS (131 aa)) is disordered. At S127 the chain carries Phosphoserine. Residues 134–168 (RYRDNRSRDERKKDDRSRKRDYDRNPPRRDSYRDR) are compositionally biased toward basic and acidic residues. A compositionally biased stretch (basic residues) spans 169–186 (YNRRRGRSRSYSRSRSRS). Composition is skewed to basic and acidic residues over residues 187-201 (WSKE…DRSR) and 209-227 (RSRE…RTDP). The segment at 288-316 (PMPKKRCRDYDEKGFCMRGDMCPFDHGSD) adopts a C3H1-type zinc-finger fold. A compositionally biased stretch (pro residues) spans 334-388 (QPPVVEGPPPPGLPPPPPILTPPPVNLRPPVPPPGPLPPSLPPVTGPPPPLPPLQ). Disordered stretches follow at residues 334-404 (QPPV…SSVP) and 465-520 (IGLT…NFNR). Over residues 394–404 (APPNSATSSVP) the composition is skewed to low complexity. S501 is subject to Phosphoserine. K515 is modified (N6-acetyllysine). Phosphoserine is present on S523. Positions 537 to 611 (TKLELRKVPP…RFIKVYWHRE (75 aa)) constitute an RRM 1 domain. S621 is subject to Phosphoserine. A disordered region spans residues 647-667 (PVPSATTEPAEAQSATSELPQ). Coiled-coil stretches lie at residues 724–800 (DNNE…KSTS) and 828–852 (KKMQ…EAAK). Positions 858 to 889 (SGRGRGIHTRGRGTAHGRGRGRGRGRGVPGHA) are disordered. The span at 862-882 (RGIHTRGRGTAHGRGRGRGRG) shows a compositional bias: basic residues. The RRM 2 domain maps to 896 to 965 (RALEISAFTE…QDLKLAWNKP (70 aa)). Residues 970–1012 (SAVDTEEAEPDEEEFQEESLVDDSLLQDDDEEEEDNESRSWRR) form a disordered region. Residues 973-1005 (DTEEAEPDEEEFQEESLVDDSLLQDDDEEEEDN) show a composition bias toward acidic residues.

Expressed in testis and ovary.

Functionally, may be involved in the turnover of nuclear polyadenylated (pA+) RNA. In Mus musculus (Mouse), this protein is RNA-binding protein 26.